Reading from the N-terminus, the 155-residue chain is SsrA-binding protein (155 aa).

This sequence belongs to the SmpB family.

The protein resides in the cytoplasm. In terms of biological role, required for rescue of stalled ribosomes mediated by trans-translation. Binds to transfer-messenger RNA (tmRNA), required for stable association of tmRNA with ribosomes. tmRNA and SmpB together mimic tRNA shape, replacing the anticodon stem-loop with SmpB. tmRNA is encoded by the ssrA gene; the 2 termini fold to resemble tRNA(Ala) and it encodes a 'tag peptide', a short internal open reading frame. During trans-translation Ala-aminoacylated tmRNA acts like a tRNA, entering the A-site of stalled ribosomes, displacing the stalled mRNA. The ribosome then switches to translate the ORF on the tmRNA; the nascent peptide is terminated with the 'tag peptide' encoded by the tmRNA and targeted for degradation. The ribosome is freed to recommence translation, which seems to be the essential function of trans-translation. The protein is SsrA-binding protein of Alkaliphilus oremlandii (strain OhILAs) (Clostridium oremlandii (strain OhILAs)).